The following is a 74-amino-acid chain: Putative defensin-like protein 36 (74 aa).

The first 22 residues, 1–22, serve as a signal peptide directing secretion; sequence MASNKVSFFLVLCLCILLAGEC. Cystine bridges form between Cys33/Cys59, Cys45/Cys69, and Cys49/Cys71.

The protein belongs to the DEFL family.

It is found in the secreted. This Arabidopsis thaliana (Mouse-ear cress) protein is Putative defensin-like protein 36.